Reading from the N-terminus, the 249-residue chain is NADH-quinone oxidoreductase subunit C (249 aa).

The tract at residues 1–29 is disordered; sequence MTENQTTPDPGEPGSSADRPGGLVPTGDS.

This sequence belongs to the complex I 30 kDa subunit family. In terms of assembly, NDH-1 is composed of 14 different subunits. Subunits NuoB, C, D, E, F, and G constitute the peripheral sector of the complex.

Its subcellular location is the cell membrane. The catalysed reaction is a quinone + NADH + 5 H(+)(in) = a quinol + NAD(+) + 4 H(+)(out). NDH-1 shuttles electrons from NADH, via FMN and iron-sulfur (Fe-S) centers, to quinones in the respiratory chain. The immediate electron acceptor for the enzyme in this species is believed to be a menaquinone. Couples the redox reaction to proton translocation (for every two electrons transferred, four hydrogen ions are translocated across the cytoplasmic membrane), and thus conserves the redox energy in a proton gradient. This is NADH-quinone oxidoreductase subunit C from Saccharopolyspora erythraea (strain ATCC 11635 / DSM 40517 / JCM 4748 / NBRC 13426 / NCIMB 8594 / NRRL 2338).